The primary structure comprises 130 residues: Small ribosomal subunit protein uS11 (130 aa).

It belongs to the universal ribosomal protein uS11 family. Part of the 30S ribosomal subunit. Interacts with proteins S7 and S18. Binds to IF-3.

Functionally, located on the platform of the 30S subunit, it bridges several disparate RNA helices of the 16S rRNA. Forms part of the Shine-Dalgarno cleft in the 70S ribosome. The chain is Small ribosomal subunit protein uS11 from Nitratiruptor sp. (strain SB155-2).